We begin with the raw amino-acid sequence, 339 residues long: Anthranilate phosphoribosyltransferase (339 aa).

5-phospho-alpha-D-ribose 1-diphosphate is bound by residues G79, 82–83 (GD), S87, 89–92 (NIST), 107–115 (KHGNRSISS), and S119. G79 contacts anthranilate. Residue S91 participates in Mg(2+) binding. Position 110 (N110) interacts with anthranilate. R165 is an anthranilate binding site. The Mg(2+) site is built by D224 and E225.

The protein belongs to the anthranilate phosphoribosyltransferase family. In terms of assembly, homodimer. The cofactor is Mg(2+).

It catalyses the reaction N-(5-phospho-beta-D-ribosyl)anthranilate + diphosphate = 5-phospho-alpha-D-ribose 1-diphosphate + anthranilate. It functions in the pathway amino-acid biosynthesis; L-tryptophan biosynthesis; L-tryptophan from chorismate: step 2/5. Its function is as follows. Catalyzes the transfer of the phosphoribosyl group of 5-phosphorylribose-1-pyrophosphate (PRPP) to anthranilate to yield N-(5'-phosphoribosyl)-anthranilate (PRA). This chain is Anthranilate phosphoribosyltransferase, found in Listeria monocytogenes serotype 4a (strain HCC23).